The chain runs to 73 residues: Omega-conotoxin CVID (73 aa).

Positions methionine 1–alanine 22 are cleaved as a signal peptide. Residues aspartate 23 to arginine 45 constitute a propeptide that is removed on maturation. 3 cysteine pairs are disulfide-bonded: cysteine 46–cysteine 61, cysteine 53–cysteine 65, and cysteine 60–cysteine 72. At cysteine 72 the chain carries Cysteine amide.

The protein belongs to the conotoxin O1 superfamily. As to expression, expressed by the venom duct.

Its subcellular location is the secreted. Its function is as follows. Omega-conotoxins act at presynaptic membranes, they bind and block voltage-gated calcium channels. This toxin inhibits neurotransmitter release, it blocks N-type calcium channels, probably a N-type (Cav2.2/CACNA1B) calcium channel variant. The chain is Omega-conotoxin CVID from Conus catus (Cat cone).